Reading from the N-terminus, the 261-residue chain is Putative methyltransferase MJ0046 (261 aa).

The protein belongs to the methyltransferase superfamily.

The sequence is that of Putative methyltransferase MJ0046 from Methanocaldococcus jannaschii (strain ATCC 43067 / DSM 2661 / JAL-1 / JCM 10045 / NBRC 100440) (Methanococcus jannaschii).